Here is a 559-residue protein sequence, read N- to C-terminus: Glutamine--tRNA ligase (559 aa).

A 'HIGH' region motif is present at residues 44 to 54 (PEPNGYLHIGH). ATP-binding positions include 45–47 (EPN) and 51–57 (HIGHAKS). L-glutamine contacts are provided by Asp77 and Tyr222. ATP contacts are provided by residues Thr241 and 272-273 (RL). Positions 279–283 (LTSKR) match the 'KMSKS' region motif.

This sequence belongs to the class-I aminoacyl-tRNA synthetase family. In terms of assembly, monomer.

The protein localises to the cytoplasm. It catalyses the reaction tRNA(Gln) + L-glutamine + ATP = L-glutaminyl-tRNA(Gln) + AMP + diphosphate. This is Glutamine--tRNA ligase from Actinobacillus succinogenes (strain ATCC 55618 / DSM 22257 / CCUG 43843 / 130Z).